The primary structure comprises 211 residues: Bacteriorhodopsin (211 aa).

Residues 1–19 form a helical membrane-spanning segment; that stretch reads IWLWLGTAGMFLGMLYFIA. Residues 20 to 33 lie on the Cytoplasmic side of the membrane; that stretch reads RGWGETDSRRQKFY. Residues 34–52 traverse the membrane as a helical segment; the sequence is IATILITAIAFVNYLAMAL. At 53–68 the chain is on the extracellular side; that stretch reads GFGLTIVEFAGEEHPI. Residues 69–86 form a helical membrane-spanning segment; it reads YWARYSDWLFTTPLLLYD. At 87-97 the chain is on the cytoplasmic side; sequence LGLLAGADRNT. A helical transmembrane segment spans residues 98-117; that stretch reads ITSLVSLDVLMIGTGLVATL. The Extracellular portion of the chain corresponds to 118–130; the sequence is SAGSGVLSAGAER. Residues 131-150 traverse the membrane as a helical segment; it reads LVWWGISTAFLLVLLYFLFS. Topologically, residues 151–168 are cytoplasmic; it reads SLSGRVADLPSDTRSTFK. A helical transmembrane segment spans residues 169-187; the sequence is TLRNLVTVVWLVYPVWWLI. Topologically, residues 188–199 are extracellular; it reads GTEGIGLVGIGI. A helical transmembrane segment spans residues 200–211; that stretch reads ETAGFMVIDLTA.

It belongs to the archaeal/bacterial/fungal opsin family.

Its subcellular location is the cell membrane. In terms of biological role, light-driven proton pump. The polypeptide is Bacteriorhodopsin (bop) (Halobacterium halobium (strain port)).